A 696-amino-acid chain; its full sequence is Glycine--tRNA ligase beta subunit (696 aa).

It belongs to the class-II aminoacyl-tRNA synthetase family. As to quaternary structure, tetramer of two alpha and two beta subunits.

Its subcellular location is the cytoplasm. It carries out the reaction tRNA(Gly) + glycine + ATP = glycyl-tRNA(Gly) + AMP + diphosphate. The sequence is that of Glycine--tRNA ligase beta subunit from Nitratidesulfovibrio vulgaris (strain DP4) (Desulfovibrio vulgaris).